A 223-amino-acid chain; its full sequence is MPLPLLPPLLLPLEALLDLALHLVDSTGVAYSARQVTPTAPLPRLRGSSTSNDVTDNSGCKELTFIFARGTTEIGNMGTVVGPKVGEALKSLTGNKAAIQGVDYPADAAGNAALGGSGGPKMASLVETALKQCPDTKIVLGGYSQGAMVVHNAASKLSSGQVVGAVTFGDPFKSQKPDNIDQFKTFCASGDPVCLNGANVMAHLSYGNDAQTAAQFLVSAAGL.

The first 26 residues, 1 to 26 (MPLPLLPPLLLPLEALLDLALHLVDS), serve as a signal peptide directing secretion. Cysteine 60 and cysteine 133 are joined by a disulfide. The active-site Nucleophile is serine 144. Cysteine 187 and cysteine 194 are disulfide-bonded. Aspartate 191 is a catalytic residue. The active-site Proton donor/acceptor is the histidine 203.

The protein belongs to the cutinase family. In terms of processing, the 2 disulfide bonds play a critical role in holding the catalytic residues in juxta-position; reduction of the disulfide bridges results in the complete inactivation of the enzyme.

It localises to the secreted. It carries out the reaction cutin + H2O = cutin monomers.. Its function is as follows. Catalyzes the hydrolysis of complex carboxylic polyesters found in the cell wall of plants. Degrades cutin, a macromolecule that forms the structure of the plant cuticle. Also degrades suberin, a specialized macromolecule found in the cell wall of various plant tissues. The polypeptide is Cutinase 4 (Emericella nidulans (strain FGSC A4 / ATCC 38163 / CBS 112.46 / NRRL 194 / M139) (Aspergillus nidulans)).